A 537-amino-acid polypeptide reads, in one-letter code: Glucans biosynthesis protein D 2 (537 aa).

The segment at residues methionine 1–alanine 28 is a signal peptide (tat-type signal).

Belongs to the OpgD/OpgG family. Predicted to be exported by the Tat system. The position of the signal peptide cleavage has not been experimentally proven.

Its subcellular location is the periplasm. It functions in the pathway glycan metabolism; osmoregulated periplasmic glucan (OPG) biosynthesis. Probably involved in the control of the structural glucose backbone of osmoregulated periplasmic glucans (OPGs). The polypeptide is Glucans biosynthesis protein D 2 (opgD2) (Ralstonia nicotianae (strain ATCC BAA-1114 / GMI1000) (Ralstonia solanacearum)).